We begin with the raw amino-acid sequence, 1715 residues long: Rho guanine nucleotide exchange factor TIAM2 (1715 aa).

2 stretches are compositionally biased toward polar residues: residues 1 to 22 (MGNSESQYTFQGSKNHSNTVTG) and 218 to 229 (GSPSSQRPSPTD). 4 disordered regions span residues 1-27 (MGNSESQYTFQGSKNHSNTVTGAKQKP), 174-249 (FHNG…WYDS), 263-294 (SFLAPSTPDPSLPSSFPPSDTKKPFNQSSSLS), and 385-418 (TGSLSRKKRKLQEPRSMEGSEYFDSHSDGLNAEG). Gly-2 is lipidated: N-myristoyl glycine. Positions 235-245 (SKGSSLSSESS) are enriched in low complexity. The span at 395 to 411 (LQEPRSMEGSEYFDSHS) shows a compositional bias: basic and acidic residues. Residues 504–618 (VVRKAGWLFF…WVTAIHSACA (115 aa)) enclose the PH 1 domain. A coiled-coil region spans residues 665 to 692 (PKNRKAIENQIRQWEQNLEKFHMDLFRM). Residues 831–902 (VQTYVHFQDN…YMQEQVYDEI (72 aa)) enclose the RBD domain. One can recognise a PDZ domain in the interval 911-997 (DVQLTKTGDM…GLTLVARPVT (87 aa)). The tract at residues 1092 to 1113 (THTNSMEAPTESHDPPPRPLAR) is disordered. The 195-residue stretch at 1120–1314 (RLRKVIQELV…EKVASHINEM (195 aa)) folds into the DH domain. Residues 1347-1478 (LLMHSTVSWL…KVIRSILREN (132 aa)) enclose the PH 2 domain. Positions 1515–1582 (SLKGLRTSSS…EGLAEFPDGL (68 aa)) are disordered. The segment covering 1522–1532 (SSSSEWPSEPS) has biased composition (low complexity). The span at 1533 to 1552 (KGNSLDSDECSLSSGTQSSG) shows a compositional bias: polar residues. The segment covering 1557-1572 (ESRRDSKSTELEKDAQ) has biased composition (basic and acidic residues). Phosphoserine is present on Ser-1604. Position 1662 is a phosphothreonine (Thr-1662).

It belongs to the TIAM family. As to quaternary structure, interacts with MAP1A, MAP1B, PARP1 and YWHAE. Interacts with CD44, PARD3 and MAPK8IP2. Phosphorylated on serine and threonine residues. Phosphorylated on Thr-1662 by Rho-kinase. Its phosphorylation by Rho-kinase inhibits its guanine nucleotide exchange activity, its interaction with MAP1A, MAP1B, PARP1 and YWHAE and reduces its ability to promote neurite growth. In terms of tissue distribution, expressed in fetal brain (at protein level). Expressed in the olfactory bulb, cortical plate of the cerebral cortex, caudate putamen, hippocampus, ependymal cells of the lateral surface of the lateral ventricles of the brain. Weakly expressed in heart, lung, liver, skeletal muscle, kidney and testis.

The protein localises to the cytoplasm. It is found in the cell projection. Its subcellular location is the lamellipodium. It localises to the filopodium. The protein resides in the growth cone. The protein localises to the neuron projection. It is found in the perikaryon. Modulates the activity of RHO-like proteins and connects extracellular signals to cytoskeletal activities. Acts as a GDP-dissociation stimulator protein that stimulates the GDP-GTP exchange activity of RHO-like GTPases and activates them. Activates specifically RAC1, but not CDC42 and RHOA. Mediates extracellular laminin signals to activate Rac1, contributing to neurite growth. Involved in lamellipodial formation and advancement of the growth cone of embryonic hippocampal neurons. Promotes migration of neurons in the cerebral cortex. When overexpressed, induces membrane ruffling accompanied by the accumulation of actin filaments along the altered plasma membrane. This chain is Rho guanine nucleotide exchange factor TIAM2, found in Mus musculus (Mouse).